The following is a 948-amino-acid chain: UvrABC system protein A (948 aa).

Position 31 to 38 (31 to 38) interacts with ATP; that stretch reads GLSGSGKS. Residues 249 to 277 form a C4-type zinc finger; it reads CPNGHDIGFTELSPRMFSFNSPYGACETC. 2 consecutive ABC transporter domains span residues 307 to 586 and 606 to 934; these read WAGS…KNSL and GNGS…QYLK. 638-645 contributes to the ATP binding site; the sequence is GVSGSGKS. Residues 737–763 form a C4-type zinc finger; it reads CETCEGDGILKIEMHFLPDVYVTCEVC.

It belongs to the ABC transporter superfamily. UvrA family. In terms of assembly, forms a heterotetramer with UvrB during the search for lesions.

It localises to the cytoplasm. The UvrABC repair system catalyzes the recognition and processing of DNA lesions. UvrA is an ATPase and a DNA-binding protein. A damage recognition complex composed of 2 UvrA and 2 UvrB subunits scans DNA for abnormalities. When the presence of a lesion has been verified by UvrB, the UvrA molecules dissociate. This is UvrABC system protein A from Leptospira interrogans serogroup Icterohaemorrhagiae serovar copenhageni (strain Fiocruz L1-130).